The chain runs to 312 residues: MNAGILGVGKYVPEKILTNFDLEKMMETSDEWIRTRTGIEERRIARDDEYTHDLAYEAAKVAIENAGLTPDDIDLFIVATVTQEATFPSVANIIQDRLGAKNAAGMDVEAACAGFTFGVVTAAQFIKTGAYKNIVVVGADKLSKITNWDDRATAVLFGDGAGAVVMGPVSDDHGLLSFDLGSDGSGGKYLNLDENKKIYMNGREVFRFAVRQMGEASLRVLESAGLEKEDLDLLIPHQANIRIMEASRERLNLPEEKLMKTVHKYGNTSSSSIALALVDAVEEGRIKDNDNVLLVGFGGGLTWGALIIRWGK.

Residues cysteine 112 and histidine 237 contribute to the active site. The tract at residues 238–242 (QANIR) is ACP-binding. Asparagine 267 is an active-site residue.

The protein belongs to the thiolase-like superfamily. FabH family. As to quaternary structure, homodimer.

It localises to the cytoplasm. It catalyses the reaction malonyl-[ACP] + acetyl-CoA + H(+) = 3-oxobutanoyl-[ACP] + CO2 + CoA. Its pathway is lipid metabolism; fatty acid biosynthesis. Catalyzes the condensation reaction of fatty acid synthesis by the addition to an acyl acceptor of two carbons from malonyl-ACP. Catalyzes the first condensation reaction which initiates fatty acid synthesis and may therefore play a role in governing the total rate of fatty acid production. Possesses both acetoacetyl-ACP synthase and acetyl transacylase activities. Its substrate specificity determines the biosynthesis of branched-chain and/or straight-chain of fatty acids. This Listeria innocua serovar 6a (strain ATCC BAA-680 / CLIP 11262) protein is Beta-ketoacyl-[acyl-carrier-protein] synthase III.